Here is a 1174-residue protein sequence, read N- to C-terminus: Probable pyruvate-flavodoxin oxidoreductase (1174 aa).

4Fe-4S ferredoxin-type domains are found at residues 680–709 (EIPI…AKVV) and 736–765 (YVLQ…NPEI). Residues Cys689, Cys692, Cys695, Cys699, Cys745, Cys748, Cys751, Cys755, Cys819, Cys822, Cys847, and Cys1071 each contribute to the [4Fe-4S] cluster site.

Belongs to the pyruvate:ferredoxin/flavodoxin oxidoreductase family. [4Fe-4S] cluster is required as a cofactor.

It catalyses the reaction oxidized [flavodoxin] + pyruvate + CoA + 2 H(+) = reduced [flavodoxin] + acetyl-CoA + CO2. Oxidoreductase required for the transfer of electrons from pyruvate to flavodoxin. The protein is Probable pyruvate-flavodoxin oxidoreductase (ydbK) of Escherichia coli (strain K12).